A 457-amino-acid chain; its full sequence is UDP-N-acetylmuramate--L-alanine ligase (457 aa).

ATP is bound at residue 118–124; sequence GTHGKTT.

This sequence belongs to the MurCDEF family.

The protein resides in the cytoplasm. It catalyses the reaction UDP-N-acetyl-alpha-D-muramate + L-alanine + ATP = UDP-N-acetyl-alpha-D-muramoyl-L-alanine + ADP + phosphate + H(+). It functions in the pathway cell wall biogenesis; peptidoglycan biosynthesis. Its function is as follows. Cell wall formation. This chain is UDP-N-acetylmuramate--L-alanine ligase, found in Clostridium perfringens (strain 13 / Type A).